The primary structure comprises 1208 residues: Lysine-specific demethylase JMJ17 (1208 aa).

A PHD-type 1; degenerate zinc finger spans residues 1 to 36 (MLLCDSCNKGWHIYCLSPPLKHIPLGNWYCLECLNT). Zn(2+)-binding residues include cysteine 4, cysteine 7, cysteine 30, and cysteine 33. Positions 126-292 (EYCGSPWNLN…YGGSGAELYR (167 aa)) constitute a JmjC domain. Residues histidine 172, glutamate 174, and histidine 260 each contribute to the Fe cation site. Cysteine 369, cysteine 372, cysteine 383, cysteine 385, cysteine 392, histidine 395, cysteine 400, and cysteine 402 together coordinate Zn(2+). A C5HC2 zinc finger spans residues 369–421 (CIICQQFLHLSAIVCNCRPSVFACLEHWKHLCECEPTKLRLEYRYTLAELDMM). Residues 613–620 (SKKISSAK) carry the Nuclear localization signal motif. The PHD-type 2 zinc finger occupies 1099 to 1145 (MLHCICLKPYNSRSMVSCSQCGEWYHTYCLKLHWRPKAYVCSACCPL). 8 residues coordinate Zn(2+): cysteine 1102, cysteine 1104, cysteine 1116, cysteine 1119, histidine 1124, cysteine 1127, cysteine 1139, and cysteine 1142.

It belongs to the JARID1 histone demethylase family. The cofactor is Fe(2+). Expressed in inflorescences, roots, seedlings and siliques, and, at low levels, in leaves and stems.

Its subcellular location is the nucleus. It carries out the reaction N(6),N(6),N(6)-trimethyl-L-lysyl(4)-[histone H3] + 2-oxoglutarate + O2 = N(6),N(6)-dimethyl-L-lysyl(4)-[histone H3] + formaldehyde + succinate + CO2. The catalysed reaction is N(6),N(6)-dimethyl-L-lysyl(4)-[histone H3] + 2-oxoglutarate + O2 = N(6)-methyl-L-lysyl(4)-[histone H3] + formaldehyde + succinate + CO2. The enzyme catalyses N(6)-methyl-L-lysyl(4)-[histone H3] + 2-oxoglutarate + O2 = L-lysyl(4)-[histone H3] + formaldehyde + succinate + CO2. It catalyses the reaction N(6),N(6),N(6)-trimethyl-L-lysyl(4)-[histone H3] + 3 2-oxoglutarate + 3 O2 = L-lysyl(4)-[histone H3] + 3 formaldehyde + 3 succinate + 3 CO2. Its function is as follows. Functions as a histone H3 'Lys-4' (H3K4me) demethylase involved in the regulation of gene expression. Active on H3K4me1, H3K4me2 and H3K4me3. Repressor of the abscisic acid (ABA) signaling pathway, especially during stomatal closure regulation. Negative regulator of responses to dehydration stress by binding directly to the chromatin of SRK2E/OST1 and demethylating H3K4me3 to regulates its expression. Together with JMJ14 and JMJ16, required for plant growth and development. In Arabidopsis thaliana (Mouse-ear cress), this protein is Lysine-specific demethylase JMJ17.